The chain runs to 397 residues: MERFKKASSIIETLKQQGHEAYFVGGSVRDLIIDRPIGDIDIATSALPEEVMAIFPRHVPVGLEHGTVIVVENGEPYEVTTFRTESEYEDFRRPSSVQFVRSLEEDLKRRDFTMNAIAMTEEGKMVDLFAGQEAIQKREIMTVGNAADRFQEDALRMMRGIRFVSTLGFSLETKTKQAIETYGHLLEHIAIERITVEFEKLLTGTYCVKALKELVETKLFSHLPYLQMSEEKLLKATQYKWDSFEADIEAWAFFLYCIGEEHPAVFLRQWKFSNKKIKDIVAVLLTIRKRKEKDWDTVLLYKTGIHIAEMAERVYEAMIESYDHTAVNRVQTLFQALPIKNRQEMNVTGNDLLNWASKKPGPWVAEMIQKIEEAIVQGNVVNEKECIREWLQECNLL.

ATP-binding residues include Gly-26 and Arg-29. Residues Gly-26 and Arg-29 each coordinate CTP. Mg(2+) is bound by residues Asp-39 and Asp-41. 5 residues coordinate ATP: Arg-110, Asp-153, Arg-156, Arg-159, and Arg-162. Residues Arg-110, Asp-153, Arg-156, Arg-159, and Arg-162 each contribute to the CTP site.

This sequence belongs to the tRNA nucleotidyltransferase/poly(A) polymerase family. Bacterial CCA-adding enzyme type 3 subfamily. Homodimer. Requires Mg(2+) as cofactor.

The catalysed reaction is a tRNA precursor + 2 CTP + ATP = a tRNA with a 3' CCA end + 3 diphosphate. The enzyme catalyses a tRNA with a 3' CCA end + 2 CTP + ATP = a tRNA with a 3' CCACCA end + 3 diphosphate. Functionally, catalyzes the addition and repair of the essential 3'-terminal CCA sequence in tRNAs without using a nucleic acid template. Adds these three nucleotides in the order of C, C, and A to the tRNA nucleotide-73, using CTP and ATP as substrates and producing inorganic pyrophosphate. tRNA 3'-terminal CCA addition is required both for tRNA processing and repair. Also involved in tRNA surveillance by mediating tandem CCA addition to generate a CCACCA at the 3' terminus of unstable tRNAs. While stable tRNAs receive only 3'-terminal CCA, unstable tRNAs are marked with CCACCA and rapidly degraded. The protein is CCA-adding enzyme of Bacillus cereus (strain Q1).